The following is a 540-amino-acid chain: Chaperonin GroEL 2/3 (540 aa).

ATP is bound by residues 30 to 33, Lys51, 87 to 91, Gly415, 479 to 481, and Asp495; these read TLGP, DGTTT, and NAA.

It belongs to the chaperonin (HSP60) family. As to quaternary structure, forms a cylinder of 14 subunits composed of two heptameric rings stacked back-to-back. Interacts with the co-chaperonin GroES.

The protein localises to the cytoplasm. The enzyme catalyses ATP + H2O + a folded polypeptide = ADP + phosphate + an unfolded polypeptide.. In terms of biological role, together with its co-chaperonin GroES, plays an essential role in assisting protein folding. The GroEL-GroES system forms a nano-cage that allows encapsulation of the non-native substrate proteins and provides a physical environment optimized to promote and accelerate protein folding. This is Chaperonin GroEL 2/3 from Paraburkholderia xenovorans (strain LB400).